The sequence spans 129 residues: Small ribosomal subunit protein uS11 (129 aa).

This sequence belongs to the universal ribosomal protein uS11 family. In terms of assembly, part of the 30S ribosomal subunit. Interacts with proteins S7 and S18. Binds to IF-3.

Located on the platform of the 30S subunit, it bridges several disparate RNA helices of the 16S rRNA. Forms part of the Shine-Dalgarno cleft in the 70S ribosome. This Geobacillus kaustophilus (strain HTA426) protein is Small ribosomal subunit protein uS11.